Reading from the N-terminus, the 366-residue chain is Ribosomal RNA large subunit methyltransferase M (366 aa).

S-adenosyl-L-methionine is bound by residues serine 188, 221-224, aspartate 240, aspartate 260, and aspartate 277; that span reads CPGG. Lysine 306 serves as the catalytic Proton acceptor.

This sequence belongs to the class I-like SAM-binding methyltransferase superfamily. RNA methyltransferase RlmE family. RlmM subfamily. Monomer.

The protein resides in the cytoplasm. The enzyme catalyses cytidine(2498) in 23S rRNA + S-adenosyl-L-methionine = 2'-O-methylcytidine(2498) in 23S rRNA + S-adenosyl-L-homocysteine + H(+). Functionally, catalyzes the 2'-O-methylation at nucleotide C2498 in 23S rRNA. This is Ribosomal RNA large subunit methyltransferase M from Salmonella paratyphi C (strain RKS4594).